A 286-amino-acid chain; its full sequence is Bifunctional protein FolD (286 aa).

Residues 166-168 (GAS) and Ile232 contribute to the NADP(+) site.

The protein belongs to the tetrahydrofolate dehydrogenase/cyclohydrolase family. Homodimer.

The enzyme catalyses (6R)-5,10-methylene-5,6,7,8-tetrahydrofolate + NADP(+) = (6R)-5,10-methenyltetrahydrofolate + NADPH. It carries out the reaction (6R)-5,10-methenyltetrahydrofolate + H2O = (6R)-10-formyltetrahydrofolate + H(+). It participates in one-carbon metabolism; tetrahydrofolate interconversion. Its function is as follows. Catalyzes the oxidation of 5,10-methylenetetrahydrofolate to 5,10-methenyltetrahydrofolate and then the hydrolysis of 5,10-methenyltetrahydrofolate to 10-formyltetrahydrofolate. In Shewanella piezotolerans (strain WP3 / JCM 13877), this protein is Bifunctional protein FolD.